The sequence spans 176 residues: MNKNRQLAVNSNILFRKWLNGTREMVQDTIFHSRLHKVNQKIRSKRMFFEQDVHSNYFSFYKKKDFFKENPVSYVRNKDFTNVLKKLKKGKYYPDIFLDLHGLNQYQARKKLGQLIAICQKEKMFCAHIMHGYGKNILKKQIPFWLSQHPDIVAFHQAPKMFGNDAAIMVIIEIHS.

The 76-residue stretch at L98–E173 folds into the Smr domain.

Belongs to the SmrB family. In terms of assembly, associates with collided ribosomes, but not with correctly translating polysomes.

Its function is as follows. Acts as a ribosome collision sensor. Detects stalled/collided disomes (pairs of ribosomes where the leading ribosome is stalled and a second ribosome has collided with it) and endonucleolytically cleaves mRNA at the 5' boundary of the stalled ribosome. Stalled/collided disomes form a new interface (primarily via the 30S subunits) that binds SmrB. Cleaved mRNA becomes available for tmRNA ligation, leading to ribosomal subunit dissociation and rescue of stalled ribosomes. The protein is Ribosome rescue factor SmrB of Buchnera aphidicola subsp. Schizaphis graminum (strain Sg).